The chain runs to 193 residues: Putative manganese efflux pump MntP (193 aa).

Transmembrane regions (helical) follow at residues 3–23 (IFAV…VAVV), 41–61 (AAFG…GVSV), 69–89 (DHWI…LSGL), 107–127 (AGRN…AVGL), 130–150 (AILG…CAVI), and 164–184 (LCAL…AIAC).

It belongs to the MntP (TC 9.B.29) family.

Its subcellular location is the cell inner membrane. Probably functions as a manganese efflux pump. The protein is Putative manganese efflux pump MntP of Desulfovibrio desulfuricans (strain ATCC 27774 / DSM 6949 / MB).